A 348-amino-acid chain; its full sequence is Aspartate carbamoyltransferase catalytic subunit (348 aa).

Carbamoyl phosphate-binding residues include R59 and T60. K87 is a binding site for L-aspartate. Carbamoyl phosphate-binding residues include R109, H142, and Q145. L-aspartate contacts are provided by R182 and R253. G294 and P295 together coordinate carbamoyl phosphate.

This sequence belongs to the aspartate/ornithine carbamoyltransferase superfamily. ATCase family. Heterododecamer (2C3:3R2) of six catalytic PyrB chains organized as two trimers (C3), and six regulatory PyrI chains organized as three dimers (R2).

It catalyses the reaction carbamoyl phosphate + L-aspartate = N-carbamoyl-L-aspartate + phosphate + H(+). It participates in pyrimidine metabolism; UMP biosynthesis via de novo pathway; (S)-dihydroorotate from bicarbonate: step 2/3. Functionally, catalyzes the condensation of carbamoyl phosphate and aspartate to form carbamoyl aspartate and inorganic phosphate, the committed step in the de novo pyrimidine nucleotide biosynthesis pathway. This Prochlorococcus marinus (strain MIT 9313) protein is Aspartate carbamoyltransferase catalytic subunit.